The sequence spans 336 residues: C2H2 finger domain transcription factor mtfA (336 aa).

The disordered stretch occupies residues 1 to 245 (MDVASLISPS…PSPGHQQMIS (245 aa)). Composition is skewed to polar residues over residues 7–29 (ISPS…SSAS) and 36–56 (EQST…YSRT). A compositionally biased stretch (low complexity) spans 136–149 (SPSTSSVSAASSSA). The segment covering 168 to 181 (TDRSSISSQGSVQH) has biased composition (polar residues). Low complexity predominate over residues 182–210 (AASAPYASPAPSVSSFSSPIEPSTPSTAA). Positions 216 to 245 (PAPNTFQNPSPFPQTSTASLPSPGHQQMIS) are enriched in polar residues. 2 consecutive C2H2-type zinc fingers follow at residues 272 to 294 (YICR…SHSH) and 300 to 325 (FRCT…RGCH).

Its subcellular location is the nucleus. Transcription factor that controls morphogenesis and virulence. Acts as a positive regulator of gliotixin and protease production. This Aspergillus fumigatus (strain CBS 144.89 / FGSC A1163 / CEA10) (Neosartorya fumigata) protein is C2H2 finger domain transcription factor mtfA.